A 352-amino-acid polypeptide reads, in one-letter code: Ion-translocating oxidoreductase complex subunit D (352 aa).

4 helical membrane passes run 20–40, 42–62, 89–109, and 123–143; these read IMLL…WFFG, GTLV…ALVL, IPPL…VIIA, and PAMI…TSWL. Position 187 is an FMN phosphoryl threonine (Thr187). 5 helical membrane passes run 214-234, 242-262, 267-287, 301-321, and 322-342; these read ILAG…GLWL, WHIP…GWLF, LAAP…FFIL, LIFG…GGYP, and DGVA…DYYT.

It belongs to the NqrB/RnfD family. As to quaternary structure, the complex is composed of six subunits: RsxA, RsxB, RsxC, RsxD, RsxE and RsxG. The cofactor is FMN.

The protein localises to the cell inner membrane. Part of a membrane-bound complex that couples electron transfer with translocation of ions across the membrane. Required to maintain the reduced state of SoxR. This chain is Ion-translocating oxidoreductase complex subunit D, found in Shigella boydii serotype 18 (strain CDC 3083-94 / BS512).